Reading from the N-terminus, the 147-residue chain is Protein LOL4 (147 aa).

3 putative zinc finger regions span residues 4–34, 44–74, and 82–112; these read QLICSGCRRVVQYRRGVAGVCCPGCNTLTAV, ELICSGCPTLLFYNRGASNIRCPSCNRLNST, and HLTCGQCRTTLMHPPGASTVQCATCRYVNHV.

The protein localises to the nucleus. Its function is as follows. Putative zinc finger that may be involved in programmed cell death and defense response. The polypeptide is Protein LOL4 (LOL4) (Oryza sativa subsp. japonica (Rice)).